Reading from the N-terminus, the 247-residue chain is Phosphoribosylaminoimidazole-succinocarboxamide synthase (247 aa).

It belongs to the SAICAR synthetase family.

It carries out the reaction 5-amino-1-(5-phospho-D-ribosyl)imidazole-4-carboxylate + L-aspartate + ATP = (2S)-2-[5-amino-1-(5-phospho-beta-D-ribosyl)imidazole-4-carboxamido]succinate + ADP + phosphate + 2 H(+). The protein operates within purine metabolism; IMP biosynthesis via de novo pathway; 5-amino-1-(5-phospho-D-ribosyl)imidazole-4-carboxamide from 5-amino-1-(5-phospho-D-ribosyl)imidazole-4-carboxylate: step 1/2. The polypeptide is Phosphoribosylaminoimidazole-succinocarboxamide synthase (Methanopyrus kandleri (strain AV19 / DSM 6324 / JCM 9639 / NBRC 100938)).